Consider the following 382-residue polypeptide: 1-deoxy-D-xylulose 5-phosphate reductoisomerase (382 aa).

6 residues coordinate NADPH: Thr10, Gly11, Ser12, Ile13, Gly36, and Asn122. Lys123 contributes to the 1-deoxy-D-xylulose 5-phosphate binding site. Position 124 (Glu124) interacts with NADPH. Asp148 contributes to the Mn(2+) binding site. 1-deoxy-D-xylulose 5-phosphate contacts are provided by Ser149, Glu150, Ser174, and His197. Glu150 is a Mn(2+) binding site. Gly203 is an NADPH binding site. 1-deoxy-D-xylulose 5-phosphate contacts are provided by Ser210, Asn215, Lys216, and Glu219. Glu219 lines the Mn(2+) pocket.

Belongs to the DXR family. Mg(2+) serves as cofactor. The cofactor is Mn(2+).

It carries out the reaction 2-C-methyl-D-erythritol 4-phosphate + NADP(+) = 1-deoxy-D-xylulose 5-phosphate + NADPH + H(+). It participates in isoprenoid biosynthesis; isopentenyl diphosphate biosynthesis via DXP pathway; isopentenyl diphosphate from 1-deoxy-D-xylulose 5-phosphate: step 1/6. In terms of biological role, catalyzes the NADPH-dependent rearrangement and reduction of 1-deoxy-D-xylulose-5-phosphate (DXP) to 2-C-methyl-D-erythritol 4-phosphate (MEP). The polypeptide is 1-deoxy-D-xylulose 5-phosphate reductoisomerase (Prosthecochloris aestuarii (strain DSM 271 / SK 413)).